A 117-amino-acid chain; its full sequence is Fluoride-specific ion channel FluC 2 (117 aa).

4 helical membrane passes run 1–21 (MITI…RALI), 33–53 (IPIA…FMMG), 61–81 (MFPF…TLSS), and 94–114 (IRFV…CFYG). Na(+) contacts are provided by Gly71 and Thr74.

The protein belongs to the fluoride channel Fluc/FEX (TC 1.A.43) family.

The protein resides in the cell membrane. The enzyme catalyses fluoride(in) = fluoride(out). Its activity is regulated as follows. Na(+) is not transported, but it plays an essential structural role and its presence is essential for fluoride channel function. Its function is as follows. Fluoride-specific ion channel. Important for reducing fluoride concentration in the cell, thus reducing its toxicity. This Staphylococcus epidermidis (strain ATCC 35984 / DSM 28319 / BCRC 17069 / CCUG 31568 / BM 3577 / RP62A) protein is Fluoride-specific ion channel FluC 2.